The chain runs to 390 residues: MKFVDEATILIVAGDGGNGCISFRREKYIPNGGPDGGDGGDGGDVYLLADENLNTLIDYRFEKSFRAERGQNGQSRDCTGKRGKDITIKVPVGTRVLDQGTGEVLGDMTRHQQSLMVGKGGWHGLGNSRFKSSVNRAPRQKTNGTKGEERELTLELLLLADVGMLGLPNAGKSTFIRAVSAAKPKVADYPFTTLVPSLGVVRMDSEQSFVVADIPGLIEGASDGAGLGIRFLKHLERCRVLLHLVDLAPIDESNPIENAKVIINELEQYGAGLAEKPRWLVFNKVDLIDKAEAEKRAKEIAAALGWDDKYYLISAANREGVNPLCWDVMNFLKANPKMMAIAESAPEKVEFMWDDYHREQLAEVEKEAEEEWDDDWDDEDDEGVEIIYQK.

One can recognise an Obg domain in the interval 1–159 (MKFVDEATIL…RELTLELLLL (159 aa)). Residues 128–147 (SRFKSSVNRAPRQKTNGTKG) form a disordered region. Residues 129–145 (RFKSSVNRAPRQKTNGT) show a composition bias toward polar residues. Residues 160–333 (ADVGMLGLPN…LCWDVMNFLK (174 aa)) enclose the OBG-type G domain. Residues 166-173 (GLPNAGKS), 191-195 (FTTLV), 213-216 (DIPG), 283-286 (NKVD), and 314-316 (SAA) each bind GTP. Mg(2+) is bound by residues S173 and T193.

It belongs to the TRAFAC class OBG-HflX-like GTPase superfamily. OBG GTPase family. As to quaternary structure, monomer. It depends on Mg(2+) as a cofactor.

Its subcellular location is the cytoplasm. Functionally, an essential GTPase which binds GTP, GDP and possibly (p)ppGpp with moderate affinity, with high nucleotide exchange rates and a fairly low GTP hydrolysis rate. Plays a role in control of the cell cycle, stress response, ribosome biogenesis and in those bacteria that undergo differentiation, in morphogenesis control. This Pectobacterium atrosepticum (strain SCRI 1043 / ATCC BAA-672) (Erwinia carotovora subsp. atroseptica) protein is GTPase Obg.